Reading from the N-terminus, the 254-residue chain is MKGRMKLRLVLDTHTHTIASGHAFSTIIENAREAFRKGLQLICITDHGPEMPGGPHIYYFGNLKVIPEKIEGVEILKGVEANIMDEEGRIDLPERILKKLDIVIASLHDECFEPSEDVERNTKALINAIKNPYVDIIGHPGNPIYPIDIERVLEAAKEYGKFIEINNSSFVTSRRGSEKICPIIAGKAKEMGVRVAVGSDAHICFDVGRFDEAIRLLEDINMPEELVLNTSVDKVKQYLQEKRKRIGGGQNSWN.

Zn(2+)-binding residues include His14, His16, His22, His47, Glu80, His108, His139, Asp200, and His202.

It belongs to the PHP family. It depends on Zn(2+) as a cofactor.

The chain is Probable phosphatase TTE1963 from Caldanaerobacter subterraneus subsp. tengcongensis (strain DSM 15242 / JCM 11007 / NBRC 100824 / MB4) (Thermoanaerobacter tengcongensis).